An 848-amino-acid chain; its full sequence is Protein translocase subunit SecA (848 aa).

ATP is bound by residues glutamine 86, 104-108 (GEGKT), and aspartate 508. Zn(2+) contacts are provided by cysteine 833, cysteine 835, cysteine 844, and cysteine 845.

The protein belongs to the SecA family. As to quaternary structure, monomer and homodimer. Part of the essential Sec protein translocation apparatus which comprises SecA, SecYEG and auxiliary proteins SecDF. Other proteins may also be involved. It depends on Zn(2+) as a cofactor.

The protein resides in the cell membrane. It is found in the cytoplasm. The catalysed reaction is ATP + H2O + cellular proteinSide 1 = ADP + phosphate + cellular proteinSide 2.. In terms of biological role, part of the Sec protein translocase complex. Interacts with the SecYEG preprotein conducting channel. Has a central role in coupling the hydrolysis of ATP to the transfer of proteins into and across the cell membrane, serving as an ATP-driven molecular motor driving the stepwise translocation of polypeptide chains across the membrane. This Caldicellulosiruptor saccharolyticus (strain ATCC 43494 / DSM 8903 / Tp8T 6331) protein is Protein translocase subunit SecA.